A 307-amino-acid polypeptide reads, in one-letter code: 4-hydroxybenzoate octaprenyltransferase (307 aa).

9 helical membrane-spanning segments follow: residues 19-39 (PVGI…AAMG), 48-68 (VTAG…AILM), 105-125 (AIAA…FLPI), 127-147 (VFYW…MKRY), 150-170 (LPQV…YVAI), 172-192 (GAAD…TVAY), 221-241 (VIII…VMWH), 243-263 (FVPT…AMMF), and 282-302 (FLAN…ACVW).

This sequence belongs to the UbiA prenyltransferase family. Mg(2+) serves as cofactor.

It is found in the cell inner membrane. The catalysed reaction is all-trans-octaprenyl diphosphate + 4-hydroxybenzoate = 4-hydroxy-3-(all-trans-octaprenyl)benzoate + diphosphate. Its pathway is cofactor biosynthesis; ubiquinone biosynthesis. Catalyzes the prenylation of para-hydroxybenzoate (PHB) with an all-trans polyprenyl group. Mediates the second step in the final reaction sequence of ubiquinone-8 (UQ-8) biosynthesis, which is the condensation of the polyisoprenoid side chain with PHB, generating the first membrane-bound Q intermediate 3-octaprenyl-4-hydroxybenzoate. This chain is 4-hydroxybenzoate octaprenyltransferase, found in Psychrobacter arcticus (strain DSM 17307 / VKM B-2377 / 273-4).